Here is a 144-residue protein sequence, read N- to C-terminus: Peroxisome assembly protein 22 (144 aa).

A helical transmembrane segment spans residues 13–35 (YGAVSLASLLVAASIVAYRWWNA).

Belongs to the peroxin-22 family.

Its subcellular location is the peroxisome membrane. In terms of biological role, involved in peroxisome biogenesis. This Eremothecium gossypii (strain ATCC 10895 / CBS 109.51 / FGSC 9923 / NRRL Y-1056) (Yeast) protein is Peroxisome assembly protein 22 (PEX22).